The primary structure comprises 386 residues: Innexin inx4 (386 aa).

Topologically, residues 1-21 are cytoplasmic; sequence MLEFVRPLQSILQIKQVNSTD. A helical transmembrane segment spans residues 22–42; sequence LVWRLHCRVTVFLLLLASLLL. Topologically, residues 43-111 are extracellular; that stretch reads SARQYFGNPI…ESERSYQKYY (69 aa). A helical membrane pass occupies residues 112–132; sequence QWVVFILALQACMFSVPNFLW. Residues 133-187 are Cytoplasmic-facing; that stretch reads KAWEAGRLQSLCDGLTTPIVPDHWEKTRKKQLITYLSADFPRLHRTYLLRYCFCT. Residues 188 to 208 form a helical membrane-spanning segment; the sequence is LLNFCNVLLNIFLVNVIFSGF. Over 209-272 the chain is Extracellular; sequence WSNYHPAVKA…LNVVNEKIFA (64 aa). A helical membrane pass occupies residues 273 to 293; it reads FIWLWFLGLLVISMLNLLFWI. Over 294–386 the chain is Cytoplasmic; that stretch reads VVLCSKGFRL…DPEGYDEEGV (93 aa). A disordered region spans residues 358-386; the sequence is HNGHKTFRMPKGGEPDFYTDPEGYDEEGV. The segment covering 374 to 386 has biased composition (acidic residues); that stretch reads FYTDPEGYDEEGV.

This sequence belongs to the pannexin family.

It localises to the cell membrane. The protein localises to the cell junction. Its subcellular location is the gap junction. Its function is as follows. Structural component of gap junctions. Required for normal development of ovary. Required for normal egg production after blood meal. Required for normal development of testis. Functionally, (Microbial infection) Modulates the development of Plasmodium falciparum oocysts. In Anopheles gambiae (African malaria mosquito), this protein is Innexin inx4.